We begin with the raw amino-acid sequence, 100 residues long: Urease subunit gamma (100 aa).

This sequence belongs to the urease gamma subunit family. In terms of assembly, heterotrimer of UreA (gamma), UreB (beta) and UreC (alpha) subunits. Three heterotrimers associate to form the active enzyme.

It is found in the cytoplasm. It catalyses the reaction urea + 2 H2O + H(+) = hydrogencarbonate + 2 NH4(+). Its pathway is nitrogen metabolism; urea degradation; CO(2) and NH(3) from urea (urease route): step 1/1. This chain is Urease subunit gamma, found in Paracidovorax citrulli (strain AAC00-1) (Acidovorax citrulli).